The following is a 679-amino-acid chain: Methionine--tRNA ligase (679 aa).

The short motif at 14–24 (PYANGSIHLGH) is the 'HIGH' region element. The Zn(2+) site is built by C145, C148, C158, and C161. Positions 331–335 (KMSKS) match the 'KMSKS' region motif. An ATP-binding site is contributed by K334. The 103-residue stretch at 577–679 (TFAAVDLRIA…NGAKPGQRVM (103 aa)) folds into the tRNA-binding domain.

Belongs to the class-I aminoacyl-tRNA synthetase family. MetG type 1 subfamily. Homodimer. Zn(2+) is required as a cofactor.

It is found in the cytoplasm. It catalyses the reaction tRNA(Met) + L-methionine + ATP = L-methionyl-tRNA(Met) + AMP + diphosphate. Functionally, is required not only for elongation of protein synthesis but also for the initiation of all mRNA translation through initiator tRNA(fMet) aminoacylation. The sequence is that of Methionine--tRNA ligase from Stutzerimonas stutzeri (strain A1501) (Pseudomonas stutzeri).